The chain runs to 163 residues: Phosphopantetheine adenylyltransferase (163 aa).

Thr9 is a substrate binding site. Residues 9-10 (TF) and His17 each bind ATP. Substrate is bound by residues Lys41, Leu76, and Arg90. ATP is bound by residues 91 to 93 (GLR), Glu101, and 126 to 132 (HQAIASR).

The protein belongs to the bacterial CoaD family. As to quaternary structure, homohexamer. Mg(2+) is required as a cofactor.

Its subcellular location is the cytoplasm. The catalysed reaction is (R)-4'-phosphopantetheine + ATP + H(+) = 3'-dephospho-CoA + diphosphate. It functions in the pathway cofactor biosynthesis; coenzyme A biosynthesis; CoA from (R)-pantothenate: step 4/5. Its function is as follows. Reversibly transfers an adenylyl group from ATP to 4'-phosphopantetheine, yielding dephospho-CoA (dPCoA) and pyrophosphate. The sequence is that of Phosphopantetheine adenylyltransferase from Caulobacter vibrioides (strain ATCC 19089 / CIP 103742 / CB 15) (Caulobacter crescentus).